The chain runs to 437 residues: MTDLTPREIVSELDRFIIGQKDAKRAVAVALRNRWRRKQLSDDLREEVYPKNILMIGPTGVGKTEISRRLAKLARAPFIKVEATKFTEVGYVGRDVEQIIRDLVENAITMTRDHMREEVKANAHQAAEERVIEAIAGSDAREATREMFRKKLKAGELDDTVIELEVADTSNPMSMFEIPGQPGMNPMGGGMDLVELFGKAFGGRTVRKKLTVAQSYEVLISEEADKLLDDEAVNRSAVTAVEQNGIVFLDEIDKVCARSDARGADVSREGVQRDLLPLIEGTTVSTKYGPVKTDHVLFIASGAFHIAKPSDLLPELQGRLPIRVELRPLTEQDFVRILTETDNALTLQYTALMGTESVTVTFAEDGIAALARIAAEVNQSVENIGARRLYTVMERVFEELSFAAPDRSGDEITVDAEFVEANLGALTRDTDLSRYVL.

ATP is bound by residues Ile-18, 60–65 (GVGKTE), Asp-250, Glu-315, and Arg-387.

It belongs to the ClpX chaperone family. HslU subfamily. In terms of assembly, a double ring-shaped homohexamer of HslV is capped on each side by a ring-shaped HslU homohexamer. The assembly of the HslU/HslV complex is dependent on binding of ATP.

It is found in the cytoplasm. ATPase subunit of a proteasome-like degradation complex; this subunit has chaperone activity. The binding of ATP and its subsequent hydrolysis by HslU are essential for unfolding of protein substrates subsequently hydrolyzed by HslV. HslU recognizes the N-terminal part of its protein substrates and unfolds these before they are guided to HslV for hydrolysis. This Dinoroseobacter shibae (strain DSM 16493 / NCIMB 14021 / DFL 12) protein is ATP-dependent protease ATPase subunit HslU.